The following is a 257-amino-acid chain: 5-keto-4-deoxy-D-glucarate aldolase (257 aa).

Catalysis depends on His51, which acts as the Proton acceptor. Substrate is bound at residue Gln152. Glu154 serves as a coordination point for Mg(2+). 2 residues coordinate substrate: Ser179 and Asp180. Asp180 lines the Mg(2+) pocket.

It belongs to the HpcH/HpaI aldolase family. KDGluc aldolase subfamily. In terms of assembly, homohexamer; trimer of dimers. Requires Mg(2+) as cofactor.

It carries out the reaction 5-dehydro-4-deoxy-D-glucarate = 2-hydroxy-3-oxopropanoate + pyruvate. It catalyses the reaction 2-dehydro-3-deoxy-D-glucarate = 2-hydroxy-3-oxopropanoate + pyruvate. It participates in carbohydrate acid metabolism; galactarate degradation; D-glycerate from galactarate: step 2/3. Functionally, catalyzes the reversible retro-aldol cleavage of both 5-keto-4-deoxy-D-glucarate and 2-keto-3-deoxy-D-glucarate to pyruvate and tartronic semialdehyde. This chain is 5-keto-4-deoxy-D-glucarate aldolase, found in Citrobacter koseri (strain ATCC BAA-895 / CDC 4225-83 / SGSC4696).